Here is an 828-residue protein sequence, read N- to C-terminus: Translation initiation factor IF-2 (828 aa).

Disordered stretches follow at residues 48-76 and 112-148; these read SYSG…SEEF and ASQE…ESTL. The segment covering 49-58 has biased composition (polar residues); that stretch reads YSGSTTTLSL. The span at 65 to 74 shows a compositional bias: low complexity; sequence LETGSSSGSE. Residues 116-126 show a composition bias toward acidic residues; the sequence is DPIEVEQEESS. Basic and acidic residues predominate over residues 127 to 144; it reads DTNKVKEEPKIEEVKDIE. In terms of domain architecture, tr-type G spans 326-496; that stretch reads SRAPVVTVMG…LLIAEMQNLK (171 aa). The interval 335-342 is G1; that stretch reads GHVDHGKT. 335 to 342 provides a ligand contact to GTP; the sequence is GHVDHGKT. The interval 360–364 is G2; the sequence is GITQH. The tract at residues 382–385 is G3; the sequence is DTPG. GTP-binding positions include 382 to 386 and 436 to 439; these read DTPGH and NKID. Residues 436–439 are G4; it reads NKID. Residues 472–474 are G5; it reads SAL.

Belongs to the TRAFAC class translation factor GTPase superfamily. Classic translation factor GTPase family. IF-2 subfamily.

Its subcellular location is the cytoplasm. In terms of biological role, one of the essential components for the initiation of protein synthesis. Protects formylmethionyl-tRNA from spontaneous hydrolysis and promotes its binding to the 30S ribosomal subunits. Also involved in the hydrolysis of GTP during the formation of the 70S ribosomal complex. The polypeptide is Translation initiation factor IF-2 (Rickettsia bellii (strain OSU 85-389)).